We begin with the raw amino-acid sequence, 343 residues long: Dihydroorotate dehydrogenase (quinone) (343 aa).

Residues 61-65 (AGLDK) and T85 contribute to the FMN site. A substrate-binding site is contributed by K65. 110–114 (NRMGF) lines the substrate pocket. FMN contacts are provided by N138 and N171. N171 is a binding site for substrate. Catalysis depends on S174, which acts as the Nucleophile. N176 contacts substrate. FMN contacts are provided by K216 and T244. Residue 245-246 (NT) coordinates substrate. FMN-binding positions include G267, G296, and 317–318 (YS).

Belongs to the dihydroorotate dehydrogenase family. Type 2 subfamily. As to quaternary structure, monomer. FMN is required as a cofactor.

The protein resides in the cell membrane. It catalyses the reaction (S)-dihydroorotate + a quinone = orotate + a quinol. It functions in the pathway pyrimidine metabolism; UMP biosynthesis via de novo pathway; orotate from (S)-dihydroorotate (quinone route): step 1/1. Its function is as follows. Catalyzes the conversion of dihydroorotate to orotate with quinone as electron acceptor. The protein is Dihydroorotate dehydrogenase (quinone) of Stutzerimonas stutzeri (strain A1501) (Pseudomonas stutzeri).